A 473-amino-acid chain; its full sequence is Photosystem II CP43 reaction center protein (473 aa).

The propeptide occupies 1–14; sequence MKTLYSLRRFYHVE. Residue T15 is modified to N-acetylthreonine. At T15 the chain carries Phosphothreonine. Transmembrane regions (helical) follow at residues 69–93, 134–155, 178–200, 255–275, and 291–312; these read LFEVAHFTPEKPMYEQGLILLPHLA, LIGPETLEESFPFFGYVWKDKN, KACYFGGVYDTWAPGGGDVRIIT, KPWAWARRAFVWSGEAYLSYS, and WFNNTAYPSEFYGPTGPEASQA. Residue E367 coordinates [CaMn4O5] cluster. A helical transmembrane segment spans residues 447–471; it reads RARAAAAGFEKGIERETEPVLFMKP.

This sequence belongs to the PsbB/PsbC family. PsbC subfamily. As to quaternary structure, PSII is composed of 1 copy each of membrane proteins PsbA, PsbB, PsbC, PsbD, PsbE, PsbF, PsbH, PsbI, PsbJ, PsbK, PsbL, PsbM, PsbT, PsbX, PsbY, PsbZ, Psb30/Ycf12, at least 3 peripheral proteins of the oxygen-evolving complex and a large number of cofactors. It forms dimeric complexes. Requires Binds multiple chlorophylls and provides some of the ligands for the Ca-4Mn-5O cluster of the oxygen-evolving complex. It may also provide a ligand for a Cl- that is required for oxygen evolution. PSII binds additional chlorophylls, carotenoids and specific lipids. as cofactor.

The protein resides in the plastid. It is found in the chloroplast thylakoid membrane. Functionally, one of the components of the core complex of photosystem II (PSII). It binds chlorophyll and helps catalyze the primary light-induced photochemical processes of PSII. PSII is a light-driven water:plastoquinone oxidoreductase, using light energy to abstract electrons from H(2)O, generating O(2) and a proton gradient subsequently used for ATP formation. This chain is Photosystem II CP43 reaction center protein, found in Mesostigma viride (Green alga).